The sequence spans 207 residues: Glutathione S-transferase P (207 aa).

The region spanning 1-78 is the GST N-terminal domain; the sequence is PPYTITYFPV…HLGRSFGLYG (78 aa). Tyr-3 is modified (phosphotyrosine; by EGFR). Glutathione contacts are provided by residues Tyr-7, Arg-13, Trp-38, Lys-42, and 49-50; that span reads QL. At Thr-59 the chain carries Phosphothreonine. 62–63 is a glutathione binding site; it reads QS. The region spanning 80–201 is the GST C-terminal domain; the sequence is DQKEAALVDM…ASPEHVNRPI (122 aa). Residues Lys-100 and Lys-113 each carry the N6-succinyllysine modification. Position 125 is an N6-acetyllysine (Lys-125).

Belongs to the GST superfamily. Pi family. In terms of assembly, homodimer. Interacts with CDK5.

The protein resides in the cytoplasm. The protein localises to the mitochondrion. It is found in the nucleus. The enzyme catalyses RX + glutathione = an S-substituted glutathione + a halide anion + H(+). The catalysed reaction is prostaglandin J2 + glutathione = prostaglandin J2-S-(R)-glutathione. It catalyses the reaction prostaglandin J2 + glutathione = prostaglandin J2-S-(S)-glutathione. It carries out the reaction prostaglandin A2 + glutathione = prostaglandin A2-S-(S)-glutathione. The enzyme catalyses 11(S)-hydroxy-14(S),15(S)-epoxy-(5Z,8Z,12E)-eicosatrienoate + glutathione = (11S,15S)-dihydroxy-14(R)-S-glutathionyl-(5Z,8Z,12E)-eicosatrienoate. In terms of biological role, conjugation of reduced glutathione to a wide number of exogenous and endogenous hydrophobic electrophiles. Involved in the formation of glutathione conjugates of both prostaglandin A2 (PGA2) and prostaglandin J2 (PGJ2). Participates in the formation of novel hepoxilin regioisomers. Negatively regulates CDK5 activity via p25/p35 translocation to prevent neurodegeneration. This chain is Glutathione S-transferase P (GSTP1), found in Sus scrofa (Pig).